The primary structure comprises 220 residues: Large ribosomal subunit protein uL16 (220 aa).

Belongs to the universal ribosomal protein uL16 family. As to quaternary structure, component of the small ribosomal subunit. Mature ribosomes consist of a small (40S) and a large (60S) subunit. The 40S subunit contains about 33 different proteins and 1 molecule of RNA (18S). The 60S subunit contains about 49 different proteins and 3 molecules of RNA (25S, 5.8S and 5S).

The protein is Large ribosomal subunit protein uL16 (RPL10) of Zea mays (Maize).